The primary structure comprises 443 residues: Frizzled/smoothened-like sans CRD protein E (443 aa).

The N-terminal stretch at 1–23 (MISHIKKFINLYTIVFLLYILYS) is a signal peptide. The Extracellular segment spans residues 24 to 83 (NENFFVKGQKLPPGFCPSPLIYRNTTDRQSDIDIGFQFLGETNCVQPCPSLILTENEWNK). Asparagine 47 carries N-linked (GlcNAc...) asparagine glycosylation. Residues 84 to 104 (VFNMSLVAGTISMFALIFLII) traverse the membrane as a helical segment. At 105 to 120 (TYSPLVNNIKDYTRHT) the chain is on the cytoplasmic side. Residues 121 to 141 (VGILFLFSGILIAMTTDGRQL) traverse the membrane as a helical segment. Topologically, residues 142–166 (WDIDLGFKKYCPEPGRFARQSDSKC) are extracellular. The helical transmembrane segment at 167 to 187 (LVTAIFFQFGCVTALLWWAAI) threads the bilayer. Residues 188 to 203 (SVDLWITIKKIKISKK) are Cytoplasmic-facing. A helical membrane pass occupies residues 204–224 (LFIIYTIAVNIVTIVLTFGPV). Residues 225–248 (GSKQYGYIDAAIGCWLMDLKYQVG) are Extracellular-facing. The chain crosses the membrane as a helical span at residues 249-269 (YFWAPVGFCLCVGCVSIVLIL). The Cytoplasmic segment spans residues 270 to 289 (KEIYNVSDAVKKKLLAKHLK). Residues 290–310 (PLMLIILMLTEFIYMFIFYSY) traverse the membrane as a helical segment. Residues 311–350 (TTSKKNHYHDIIEEYVVCLFVHAANPSVCKIGSTISPSAH) lie on the Extracellular side of the membrane. Residues 351 to 371 (FFFHLCIRLMGLEVLIFYGFT) form a helical membrane-spanning segment. Topologically, residues 372–443 (RQTRKIWMRS…SGIDDSKHDP (72 aa)) are cytoplasmic. Low complexity-rich tracts occupy residues 397-410 (SSSN…NKTS) and 419-432 (ESSE…QSIE). Residues 397–443 (SSSNDSKSSNNKTSGRVTGGFGESSEQSNEPEQSIELSGIDDSKHDP) form a disordered region.

Belongs to the G-protein coupled receptor Fz/Smo family.

The protein resides in the membrane. In Dictyostelium discoideum (Social amoeba), this protein is Frizzled/smoothened-like sans CRD protein E (fscE).